The primary structure comprises 204 residues: Outer-membrane lipoprotein carrier protein (204 aa).

A signal peptide spans 1-21 (MKKYLNLTALLLVGISNVTWA).

This sequence belongs to the LolA family. In terms of assembly, monomer.

It localises to the periplasm. In terms of biological role, participates in the translocation of lipoproteins from the inner membrane to the outer membrane. Only forms a complex with a lipoprotein if the residue after the N-terminal Cys is not an aspartate (The Asp acts as a targeting signal to indicate that the lipoprotein should stay in the inner membrane). The polypeptide is Outer-membrane lipoprotein carrier protein (Histophilus somni (strain 2336) (Haemophilus somnus)).